The following is a 203-amino-acid chain: uncharacterized protein (203 aa).

2 disordered regions span residues 65–84 and 92–170; these read LSLSEDEDEDESELEDSFDS and SSSS…ETAL. Acidic residues-rich tracts occupy residues 68-82 and 98-110; these read SEDEDEDESELEDSF and SEEESEEEEEESL. A compositionally biased stretch (low complexity) spans 111 to 122; that stretch reads DSSFLVSASLSL. The segment covering 123–168 has biased composition (acidic residues); the sequence is SEDDEEEDSESEDEDEDEDSDSDSDSDSDSDEDEDEDEDSEEEEET. A helical transmembrane segment spans residues 182–202; the sequence is TSFLLPFTLVVLAILFYPAWV.

It is found in the membrane. This is an uncharacterized protein from Saccharomyces cerevisiae (strain ATCC 204508 / S288c) (Baker's yeast).